The sequence spans 222 residues: N-acetyltransferase 8 (222 aa).

Residues 1–35 lie on the Cytoplasmic side of the membrane; that stretch reads MASFHIRQFQERDYEQVVDMFSRGMKEHIPTAFRH. Residues 36–56 traverse the membrane as a helical; Signal-anchor for type II membrane protein segment; sequence LLLLPRTLLLLLGVPLALVLV. At 57 to 222 the chain is on the lumenal side; sequence SGSWLLAVVC…IHFIYPLPSS (166 aa). Positions 62 to 217 constitute an N-acetyltransferase domain; that stretch reads LAVVCIFFLL…VDVSLIHFIY (156 aa).

It belongs to the NAT8 family.

It is found in the endoplasmic reticulum-Golgi intermediate compartment membrane. The protein localises to the endoplasmic reticulum membrane. The enzyme catalyses L-lysyl-[protein] + acetyl-CoA = N(6)-acetyl-L-lysyl-[protein] + CoA + H(+). It carries out the reaction an S-substituted L-cysteine + acetyl-CoA = an N-acetyl-L-cysteine-S-conjugate + CoA + H(+). It participates in sulfur metabolism; glutathione metabolism. In terms of biological role, endoplasmic reticulum-membrane(ER)-bound lysine N-acetyltransferase catalyzing the N6-acetylation of lysine residues in the lumen of the ER in various proteins, including PROM1 and BACE1, using acetyl-CoA as acetyl donor. Thereby, may regulate apoptosis through the acetylation and the regulation of the expression of PROM1. May also regulate amyloid beta-peptide secretion through acetylation of BACE1 and the regulation of its expression in neurons. N(6)-lysine acetylation in the ER maintains protein homeostasis and regulates reticulophagy. Alternatively, acetylates the free alpha-amino group of cysteine S-conjugates to form mercapturic acids. This is the final step in a major route for detoxification of a wide variety of reactive electrophiles which starts with their incorporation into glutathione S-conjugates. The glutathione S-conjugates are then further processed into cysteine S-conjugates and finally mercapturic acids which are water soluble and can be readily excreted in urine or bile. This chain is N-acetyltransferase 8 (Nat8), found in Rattus norvegicus (Rat).